Here is a 439-residue protein sequence, read N- to C-terminus: Proton pump-interactor 4 (439 aa).

Residues 286–354 (KEEKEIDEET…AKKKKAVCKS (69 aa)) are a coiled coil. Residues 415 to 435 (LWVWTVSSAAVALPLALLVVF) traverse the membrane as a helical segment.

The protein belongs to the plant Proton pump-interactor protein family.

The protein localises to the cell membrane. It is found in the endoplasmic reticulum membrane. In terms of biological role, may regulate plasma membrane ATPase activity. In Arabidopsis thaliana (Mouse-ear cress), this protein is Proton pump-interactor 4 (PPI4).